A 327-amino-acid polypeptide reads, in one-letter code: Beta-ketoacyl-[acyl-carrier-protein] synthase III (327 aa).

Residues Cys114 and His254 contribute to the active site. The tract at residues 255–259 (QANQR) is ACP-binding. Asn284 is an active-site residue.

This sequence belongs to the thiolase-like superfamily. FabH family. In terms of assembly, homodimer.

It is found in the cytoplasm. The enzyme catalyses malonyl-[ACP] + acetyl-CoA + H(+) = 3-oxobutanoyl-[ACP] + CO2 + CoA. The protein operates within lipid metabolism; fatty acid biosynthesis. Its function is as follows. Catalyzes the condensation reaction of fatty acid synthesis by the addition to an acyl acceptor of two carbons from malonyl-ACP. Catalyzes the first condensation reaction which initiates fatty acid synthesis and may therefore play a role in governing the total rate of fatty acid production. Possesses both acetoacetyl-ACP synthase and acetyl transacylase activities. Its substrate specificity determines the biosynthesis of branched-chain and/or straight-chain of fatty acids. This is Beta-ketoacyl-[acyl-carrier-protein] synthase III from Levilactobacillus brevis (strain ATCC 367 / BCRC 12310 / CIP 105137 / JCM 1170 / LMG 11437 / NCIMB 947 / NCTC 947) (Lactobacillus brevis).